We begin with the raw amino-acid sequence, 658 residues long: Putative endo-beta-N-acetylglucosaminidase (658 aa).

Positions methionine 1 to alanine 23 are cleaved as a signal peptide. Cell wall-binding repeat units lie at residues alanine 42–tyrosine 63, glutamate 65–methionine 84, lysine 86–methionine 105, isoleucine 124–histidine 145, glutamate 147–leucine 166, glutamine 185–tyrosine 206, aspartate 208–methionine 227, alanine 229–methionine 248, glutamate 250–methionine 271, alanine 273–isoleucine 292, glutamate 294–methionine 315, alanine 317–isoleucine 336, and glutamate 338–methionine 359.

The protein belongs to the glycosyl hydrolase 73 family.

It is found in the secreted. The catalysed reaction is an N(4)-(oligosaccharide-(1-&gt;3)-[oligosaccharide-(1-&gt;6)]-beta-D-Man-(1-&gt;4)-beta-D-GlcNAc-(1-&gt;4)-alpha-D-GlcNAc)-L-asparaginyl-[protein] + H2O = an oligosaccharide-(1-&gt;3)-[oligosaccharide-(1-&gt;6)]-beta-D-Man-(1-&gt;4)-D-GlcNAc + N(4)-(N-acetyl-beta-D-glucosaminyl)-L-asparaginyl-[protein]. Its function is as follows. Plays an important role in cell wall degradation and cell separation. The chain is Putative endo-beta-N-acetylglucosaminidase (lytB) from Streptococcus pneumoniae serotype 4 (strain ATCC BAA-334 / TIGR4).